A 191-amino-acid chain; its full sequence is Penicillin-binding protein activator LpoB (191 aa).

The N-terminal stretch at 1-16 is a signal peptide; that stretch reads MKRYLSLALAALVLTG. Cys17 carries the N-palmitoyl cysteine lipid modification. Residue Cys17 is the site of S-diacylglycerol cysteine attachment.

It belongs to the LpoB family. As to quaternary structure, interacts with PBP1b.

It localises to the cell outer membrane. Its function is as follows. Regulator of peptidoglycan synthesis that is essential for the function of penicillin-binding protein 1B (PBP1b). This Yersinia pestis (strain D182038) protein is Penicillin-binding protein activator LpoB.